The primary structure comprises 282 residues: Anamorsin homolog (282 aa).

The interval 5–151 is N-terminal SAM-like domain; the sequence is VDTNNFVLLL…EVGAKTALSL (147 aa). Positions 152–196 are linker; the sequence is SFAPKPAQPKAETSAAQIWTLSAQDIDDEDVDLLDSDTLLDEDDL. [2Fe-2S] cluster-binding residues include Cys208, Cys218, Cys221, and Cys223. The interval 208–223 is fe-S binding site A; it reads CGPGSGKKKACKNCTC. 4 residues coordinate [4Fe-4S] cluster: Cys243, Cys246, Cys254, and Cys257. Short sequence motifs (cx2C motif) lie at residues 243–246 and 254–257; these read CGSC and CSTC. The fe-S binding site B stretch occupies residues 243–257; sequence CGSCYLGDAFRCSTC.

Belongs to the anamorsin family. As to quaternary structure, monomer. Requires [2Fe-2S] cluster as cofactor. It depends on [4Fe-4S] cluster as a cofactor.

It localises to the cytoplasm. Its subcellular location is the mitochondrion intermembrane space. In terms of biological role, component of the cytosolic iron-sulfur (Fe-S) protein assembly (CIA) machinery. Required for the maturation of extramitochondrial Fe-S proteins. Part of an electron transfer chain functioning in an early step of cytosolic Fe-S biogenesis, facilitating the de novo assembly of a [4Fe-4S] cluster on the cytosolic Fe-S scaffold complex. Electrons are transferred from NADPH via a FAD- and FMN-containing diflavin oxidoreductase. Together with the diflavin oxidoreductase, also required for the assembly of the diferric tyrosyl radical cofactor of ribonucleotide reductase (RNR), probably by providing electrons for reduction during radical cofactor maturation in the catalytic small subunit. This Nematostella vectensis (Starlet sea anemone) protein is Anamorsin homolog.